Reading from the N-terminus, the 562-residue chain is Ribonuclease Y (562 aa).

The chain crosses the membrane as a helical span at residues 1–21 (MNMLYFVLALLVGLAGGFFVG). The tract at residues 108–129 (AAQDAARERETLSADRQETRRE) is disordered. The region spanning 252–312 (SVSVVPIPND…VRREVARHVL (61 aa)) is the KH domain. Residues 378–471 (VLKHSVQVAH…VAAADAISAA (94 aa)) form the HD domain.

This sequence belongs to the RNase Y family.

It is found in the cell membrane. Endoribonuclease that initiates mRNA decay. In Deinococcus geothermalis (strain DSM 11300 / CIP 105573 / AG-3a), this protein is Ribonuclease Y.